The sequence spans 262 residues: Histone chaperone cia1 (262 aa).

Residues I157 to Q262 are disordered. Coiled-coil stretches lie at residues D173 to G196 and K223 to K253. Composition is skewed to acidic residues over residues D173–E219 and E226–S242. Basic and acidic residues predominate over residues A250–Q262.

This sequence belongs to the ASF1 family. As to quaternary structure, interacts with histone H3 and histone H4.

The protein resides in the nucleus. Its function is as follows. Histone chaperone that facilitates histone deposition and histone exchange and removal during nucleosome assembly and disassembly. The sequence is that of Histone chaperone cia1 (cia1) from Schizosaccharomyces pombe (strain 972 / ATCC 24843) (Fission yeast).